Consider the following 173-residue polypeptide: Photosystem I assembly protein Ycf3 (173 aa).

3 TPR repeats span residues 35–68, 72–105, and 120–153; these read AYLYYRKGLAAQNDGDYSEALEYYEESLKLEDNQ, GETLKNMAIIYMSNGDEERAINTYKKALGQNPKQ, and GRMAQRNGNQDECDIWFDQAAEVWSKAVRLYPGG.

This sequence belongs to the Ycf3 family.

It localises to the cellular thylakoid membrane. Essential for the assembly of the photosystem I (PSI) complex. May act as a chaperone-like factor to guide the assembly of the PSI subunits. The protein is Photosystem I assembly protein Ycf3 of Prochlorococcus marinus (strain NATL2A).